Consider the following 151-residue polypeptide: MLP-like protein 328 (151 aa).

It belongs to the MLP family.

The chain is MLP-like protein 328 (MLP328) from Arabidopsis thaliana (Mouse-ear cress).